A 67-amino-acid chain; its full sequence is Light-harvesting protein B-870 alpha chain (67 aa).

N-formylmethionine; in strain DSM 149 and DSM 151 is present on methionine 1. Residues 1 to 12 are Cytoplasmic-facing; it reads MWRIWRLFDPMR. Residues 13-33 form a helical membrane-spanning segment; that stretch reads AMVAQAVFLLGLAVLIHLMLL. A bacteriochlorophyll is bound at residue histidine 29. The Periplasmic segment spans residues 34 to 67; that stretch reads GTNKYNWLDGAKKAPAATAVAPVPAEVTSLAQAK.

Belongs to the antenna complex alpha subunit family. An alpha/beta heterodimer. The core complex is formed by different alpha and beta chains, binding bacteriochlorophyll molecules, and arranged most probably in tetrameric structures disposed around the reaction center. The non-pigmented gamma chains may constitute additional components. In terms of processing, the N-terminus is blocked.

It localises to the cell inner membrane. In terms of biological role, antenna complexes are light-harvesting systems, which transfer the excitation energy to the reaction centers. The protein is Light-harvesting protein B-870 alpha chain (pufA) of Rubrivivax gelatinosus (Rhodocyclus gelatinosus).